Reading from the N-terminus, the 219-residue chain is Oligoribonuclease (219 aa).

Residues 19 to 184 (LVWVDLEMTG…ADIVESIREL (166 aa)) enclose the Exonuclease domain. Tyr-141 is a catalytic residue.

This sequence belongs to the oligoribonuclease family.

It localises to the cytoplasm. Its function is as follows. 3'-to-5' exoribonuclease specific for small oligoribonucleotides. This is Oligoribonuclease from Corynebacterium glutamicum (strain R).